The following is a 167-amino-acid chain: Translationally-controlled tumor protein homolog (167 aa).

The region spanning 1–167 is the TCTP domain; it reads MLIYQDVLTG…WKDGLKEIKI (167 aa).

It belongs to the TCTP family.

The protein resides in the cytoplasm. Its subcellular location is the cytoskeleton. Functionally, involved in protein synthesis. Involved in microtubule stabilization. The chain is Translationally-controlled tumor protein homolog from Cryptococcus neoformans var. neoformans serotype D (strain B-3501A) (Filobasidiella neoformans).